The chain runs to 329 residues: Malate dehydrogenase (329 aa).

12–18 (GAAGQIG) contacts NAD(+). Substrate contacts are provided by arginine 93 and arginine 99. Residues asparagine 106, glutamine 113, and 130–132 (TGN) each bind NAD(+). Asparagine 132 and arginine 163 together coordinate substrate. Histidine 188 acts as the Proton acceptor in catalysis.

It belongs to the LDH/MDH superfamily. MDH type 2 family.

It carries out the reaction (S)-malate + NAD(+) = oxaloacetate + NADH + H(+). Its function is as follows. Catalyzes the reversible oxidation of malate to oxaloacetate. The chain is Malate dehydrogenase from Mycobacterium ulcerans (strain Agy99).